The primary structure comprises 143 residues: Na(+)/H(+) antiporter subunit B (143 aa).

4 helical membrane passes run 9–31 (LILQ…YLFL), 36–58 (APGG…LLAY), 71–93 (FIYV…FVFG), and 117–139 (ATIF…IQTI).

Belongs to the CPA3 antiporters (TC 2.A.63) subunit B family. As to quaternary structure, forms a heterooligomeric complex that consists of seven subunits: MrpA, MrpB, MrpC, MrpD, MrpE, MrpF and MrpG.

The protein resides in the cell membrane. Functionally, mrp complex is a Na(+)/H(+) antiporter that is considered to be the major Na(+) excretion system in B.subtilis. Has a major role in Na(+) resistance and a minor role in Na(+)- and K(+)-dependent pH homeostasis as compared to TetB. MrpA may be the actual Na(+)/H(+) antiporter, although the six other Mrp proteins are all required for Na(+)/H(+) antiport activity and Na(+) resistance. MrpA is required for initiation of sporulation when external Na(+) concentration increases. Also transports Li(+) but not K(+), Ca(2+) or Mg(2+). This is Na(+)/H(+) antiporter subunit B (mrpB) from Bacillus subtilis (strain 168).